The sequence spans 317 residues: Transaldolase (317 aa).

Catalysis depends on Lys-132, which acts as the Schiff-base intermediate with substrate.

This sequence belongs to the transaldolase family. Type 1 subfamily. As to quaternary structure, homodimer.

It localises to the cytoplasm. It catalyses the reaction D-sedoheptulose 7-phosphate + D-glyceraldehyde 3-phosphate = D-erythrose 4-phosphate + beta-D-fructose 6-phosphate. It participates in carbohydrate degradation; pentose phosphate pathway; D-glyceraldehyde 3-phosphate and beta-D-fructose 6-phosphate from D-ribose 5-phosphate and D-xylulose 5-phosphate (non-oxidative stage): step 2/3. Transaldolase is important for the balance of metabolites in the pentose-phosphate pathway. This is Transaldolase from Yersinia pseudotuberculosis serotype O:3 (strain YPIII).